The chain runs to 180 residues: Large ribosomal subunit protein uL6c (180 aa).

It belongs to the universal ribosomal protein uL6 family. In terms of assembly, part of the 50S ribosomal subunit.

The protein localises to the plastid. The protein resides in the chloroplast. Binds 23S rRNA. In Porphyra purpurea (Red seaweed), this protein is Large ribosomal subunit protein uL6c (rpl6).